The chain runs to 885 residues: DNA mismatch repair protein MutS (885 aa).

ATP is bound at residue 640 to 647; sequence GPNMGGKS.

Belongs to the DNA mismatch repair MutS family.

Functionally, this protein is involved in the repair of mismatches in DNA. It is possible that it carries out the mismatch recognition step. This protein has a weak ATPase activity. The chain is DNA mismatch repair protein MutS from Variovorax paradoxus (strain S110).